The sequence spans 1119 residues: DNA-directed RNA polymerase D subunit 2b (1119 aa).

Residue D732 coordinates Mg(2+). Residues C1055, C1058, C1080, and C1083 each coordinate Zn(2+). Residues 1055 to 1083 (CRKCKTYANVIERTPSSGRKIRGPYCRVC) form a C4-type zinc finger.

Belongs to the RNA polymerase beta chain family. As to quaternary structure, component of the RNA polymerase IVa and IVb (Pol IV) complexes.

The protein resides in the nucleus. The enzyme catalyses RNA(n) + a ribonucleoside 5'-triphosphate = RNA(n+1) + diphosphate. Its function is as follows. DNA-dependent RNA polymerase catalyzes the transcription of DNA into RNA using the four ribonucleoside triphosphates as substrates. Second largest component of RNA polymerase IVa and IVb which mediate short-interfering RNAs (siRNA) accumulation and subsequent RNA-directed DNA methylation-dependent (RdDM) silencing of endogenous repeated sequences, including transposable largest subunit. Also required for full erasure of methylation elements. Required for intercellular RNA interference (RNAi) leading to systemic post-transcriptional gene silencing. The sequence is that of DNA-directed RNA polymerase D subunit 2b (NRPD2b) from Arabidopsis thaliana (Mouse-ear cress).